A 176-amino-acid polypeptide reads, in one-letter code: Inner membrane-spanning protein YciB (176 aa).

5 consecutive transmembrane segments (helical) span residues 24–44, 49–69, 76–96, 119–139, and 149–169; these read TATA…AFRH, PMLW…LVLH, WKPT…QLAF, LSVV…FVAY, and FKLF…SLWL.

Belongs to the YciB family.

The protein localises to the cell inner membrane. Its function is as follows. Plays a role in cell envelope biogenesis, maintenance of cell envelope integrity and membrane homeostasis. The polypeptide is Inner membrane-spanning protein YciB (Paraburkholderia phytofirmans (strain DSM 17436 / LMG 22146 / PsJN) (Burkholderia phytofirmans)).